A 267-amino-acid chain; its full sequence is L-aspartate dehydrogenase (267 aa).

Residues Ala124 and Asn190 each contribute to the NAD(+) site. Residue His220 is part of the active site.

The protein belongs to the L-aspartate dehydrogenase family.

It carries out the reaction L-aspartate + NADP(+) + H2O = oxaloacetate + NH4(+) + NADPH + H(+). The enzyme catalyses L-aspartate + NAD(+) + H2O = oxaloacetate + NH4(+) + NADH + H(+). The protein operates within cofactor biosynthesis; NAD(+) biosynthesis; iminoaspartate from L-aspartate (dehydrogenase route): step 1/1. Specifically catalyzes the NAD or NADP-dependent dehydrogenation of L-aspartate to iminoaspartate. The protein is L-aspartate dehydrogenase of Polaromonas sp. (strain JS666 / ATCC BAA-500).